The following is a 450-amino-acid chain: Eukaryotic translation initiation factor 3 subunit E (450 aa).

In terms of domain architecture, PCI spans 255–424 (TELFFSPAYI…GTVIMNHPPQ (170 aa)).

It belongs to the eIF-3 subunit E family. In terms of assembly, component of the eukaryotic translation initiation factor 3 (eIF-3) complex.

It is found in the cytoplasm. Functionally, component of the eukaryotic translation initiation factor 3 (eIF-3) complex, which is involved in protein synthesis of a specialized repertoire of mRNAs and, together with other initiation factors, stimulates binding of mRNA and methionyl-tRNAi to the 40S ribosome. The eIF-3 complex specifically targets and initiates translation of a subset of mRNAs involved in cell proliferation. This chain is Eukaryotic translation initiation factor 3 subunit E (int6), found in Aspergillus clavatus (strain ATCC 1007 / CBS 513.65 / DSM 816 / NCTC 3887 / NRRL 1 / QM 1276 / 107).